An 84-amino-acid polypeptide reads, in one-letter code: M-myrmeciitoxin-Mb2a (84 aa).

The signal sequence occupies residues 1–21 (MKLSCLLLTLAIIFVLTIVHA). Residues 22–48 (PNVKAKALADPESDAVGFADAVGEADP) constitute a propeptide that is removed on maturation.

It belongs to the formicidae venom precursor-01 superfamily. Ant pilosulin family. As to expression, expressed by the venom gland.

The protein resides in the secreted. Shows activity against E.coli and S.aureus (MIC&lt;6.25 uM), moderate activity against P.aeruginosa (MIC&lt;25 uM), weak activity against B.subtilis (MIC&lt;50 uM), and has no effect against L.garvieae, C.albicans, and S.cerevisiae. Has no hemolytic nor cytolytic activity. Causes an IgE-independent histamine release. In Myrmecia banksi (Jack jumper ant), this protein is M-myrmeciitoxin-Mb2a.